Here is a 342-residue protein sequence, read N- to C-terminus: Ornithine carbamoyltransferase, catabolic (342 aa).

Residues Ser-59–Thr-62, Ser-83, Arg-110, and His-137–Gln-140 each bind carbamoyl phosphate. Residues Asn-169, Asp-235, and Ser-239–Leu-240 contribute to the L-ornithine site. Residues Cys-276–Leu-277 and Arg-328 each bind carbamoyl phosphate.

Belongs to the aspartate/ornithine carbamoyltransferase superfamily. OTCase family. As to quaternary structure, dodecamer (tetramer of trimers).

Its subcellular location is the cytoplasm. It catalyses the reaction carbamoyl phosphate + L-ornithine = L-citrulline + phosphate + H(+). Its pathway is amino-acid degradation; L-arginine degradation via ADI pathway; carbamoyl phosphate from L-arginine: step 2/2. Nvolved in the catabolism of arginine. Catalyzes the phosphorolysis of citrulline, the reverse reaction of the biosynthetic one, yielding ornithine and carbamoyl phosphate which serve to generate ATP from ADP. The sequence is that of Ornithine carbamoyltransferase, catabolic (arcB) from Malacoplasma penetrans (strain HF-2) (Mycoplasma penetrans).